A 502-amino-acid polypeptide reads, in one-letter code: Probable malate:quinone oxidoreductase 1 (502 aa).

Belongs to the MQO family. FAD is required as a cofactor.

The catalysed reaction is (S)-malate + a quinone = a quinol + oxaloacetate. It participates in carbohydrate metabolism; tricarboxylic acid cycle; oxaloacetate from (S)-malate (quinone route): step 1/1. The protein is Probable malate:quinone oxidoreductase 1 of Pseudomonas putida (strain ATCC 47054 / DSM 6125 / CFBP 8728 / NCIMB 11950 / KT2440).